Here is an 875-residue protein sequence, read N- to C-terminus: Phosphoenolpyruvate carboxylase (875 aa).

Residues H137 and K542 contribute to the active site.

This sequence belongs to the PEPCase type 1 family. The cofactor is Mg(2+).

It catalyses the reaction oxaloacetate + phosphate = phosphoenolpyruvate + hydrogencarbonate. Functionally, forms oxaloacetate, a four-carbon dicarboxylic acid source for the tricarboxylic acid cycle. The chain is Phosphoenolpyruvate carboxylase from Pseudomonas putida (strain ATCC 700007 / DSM 6899 / JCM 31910 / BCRC 17059 / LMG 24140 / F1).